The chain runs to 127 residues: Fluoride-specific ion channel FluC (127 aa).

4 consecutive transmembrane segments (helical) span residues Val7 to Val27, Gly38 to Val58, Leu70 to Trp90, and Leu102 to Leu122. Gly77 and Thr80 together coordinate Na(+).

The protein belongs to the fluoride channel Fluc/FEX (TC 1.A.43) family.

It localises to the cell inner membrane. It catalyses the reaction fluoride(in) = fluoride(out). With respect to regulation, na(+) is not transported, but it plays an essential structural role and its presence is essential for fluoride channel function. Functionally, fluoride-specific ion channel. Important for reducing fluoride concentration in the cell, thus reducing its toxicity. This is Fluoride-specific ion channel FluC from Hahella chejuensis (strain KCTC 2396).